A 262-amino-acid polypeptide reads, in one-letter code: Triosephosphate isomerase (262 aa).

Position 9–11 (9–11) interacts with substrate; that stretch reads NWK. The active-site Electrophile is the His-99. Catalysis depends on Glu-171, which acts as the Proton acceptor. 2 residues coordinate substrate: Gly-177 and Ser-216.

This sequence belongs to the triosephosphate isomerase family. As to quaternary structure, homodimer.

The protein localises to the cytoplasm. It catalyses the reaction D-glyceraldehyde 3-phosphate = dihydroxyacetone phosphate. It participates in carbohydrate biosynthesis; gluconeogenesis. The protein operates within carbohydrate degradation; glycolysis; D-glyceraldehyde 3-phosphate from glycerone phosphate: step 1/1. Functionally, involved in the gluconeogenesis. Catalyzes stereospecifically the conversion of dihydroxyacetone phosphate (DHAP) to D-glyceraldehyde-3-phosphate (G3P). The sequence is that of Triosephosphate isomerase from Blochmanniella floridana.